The primary structure comprises 258 residues: DNA repair protein RecO (258 aa).

Belongs to the RecO family.

In terms of biological role, involved in DNA repair and RecF pathway recombination. The chain is DNA repair protein RecO from Oceanobacillus iheyensis (strain DSM 14371 / CIP 107618 / JCM 11309 / KCTC 3954 / HTE831).